The primary structure comprises 115 residues: Colicin-Ib immunity protein (115 aa).

Helical transmembrane passes span Val-7–Gly-27, Phe-38–Ile-58, and Ile-87–Ile-107.

It localises to the cell membrane. Its function is as follows. This protein is able to protect a cell, which harbors the plasmid IncI1 ColIb-P9 encoding colicin Ib, against colicin Ib. The protein is Colicin-Ib immunity protein of Escherichia coli.